A 407-amino-acid chain; its full sequence is Protein ZNF365 (407 aa).

Ser16 bears the Phosphoserine mark. Residues 26–51 form a C2H2-type; degenerate zinc finger; that stretch reads LRCPRCGDHTRFRSLSSLRAHLEFSH. Ser138 bears the Phosphoserine mark. Positions 169–297 form a coiled coil; the sequence is VEAVDRTIEK…QLEYYQSQQA (129 aa). Thr175 is subject to Phosphothreonine. Residues 347–392 are disordered; sequence LKKAKDDRASMQPAKAIHEQAESSRDLCRPPKKGELLGFGRKGNIR. The span at 362-381 shows a compositional bias: basic and acidic residues; the sequence is AIHEQAESSRDLCRPPKKGE. Ser369 is modified (phosphoserine).

In terms of assembly, homodimer. Interacts with NDE1 and NDEL1. Does not interact with TUBG1. Interacts with DISC1. Interacts with PARP1. Interacts with MCRS1. Isoform 1 is expressed in brain. Isoform 2 is expressed in placenta and at low level in lung and liver. Isoform 3 is expressed in kidney and pancreas. Isoform 1 is expressed exclusively in brain.

The protein resides in the cytoplasm. It is found in the cytoskeleton. It localises to the microtubule organizing center. The protein localises to the centrosome. Involved in the regulation of neurogenesis. Negatively regulates neurite outgrowth. Involved in the morphogenesis of basket cells in the somatosensory cortex during embryogenesis. Involved in the positive regulation of oligodendrocyte differentiation during postnatal growth. Involved in dendritic arborization, morphogenesis of spine density dendrite, and establishment of postsynaptic dendrite density in cortical pyramidal neurons. Involved in homologous recombination (HR) repair pathway. Required for proper resolution of DNA double-strand breaks (DSBs) by HR. Is required for recovery of stalled replication forks, and directly contributes to genomic stability. Interacts with PARP1 and mediates MRE11-dependent DNA end resection during replication fork recovery. Contributes to genomic stability by preventing telomere dysfunction. This is Protein ZNF365 (ZNF365) from Homo sapiens (Human).